A 67-amino-acid polypeptide reads, in one-letter code: Small, acid-soluble spore protein 2 (67 aa).

Belongs to the alpha/beta-type SASP family.

In terms of biological role, SASP are bound to spore DNA. They are double-stranded DNA-binding proteins that cause DNA to change to an a-like conformation. They protect the DNA backbone from chemical and enzymatic cleavage and are thus involved in dormant spore's high resistance to UV light. This is Small, acid-soluble spore protein 2 (Su-2) from Sporosarcina ureae.